Here is a 371-residue protein sequence, read N- to C-terminus: Chorismate synthase (371 aa).

Arg-48 and Arg-54 together coordinate NADP(+). FMN is bound by residues 125-127, 238-239, Gly-278, 293-297, and Arg-319; these read RSS, NA, and KPTSS.

This sequence belongs to the chorismate synthase family. As to quaternary structure, homotetramer. Requires FMNH2 as cofactor.

It carries out the reaction 5-O-(1-carboxyvinyl)-3-phosphoshikimate = chorismate + phosphate. The protein operates within metabolic intermediate biosynthesis; chorismate biosynthesis; chorismate from D-erythrose 4-phosphate and phosphoenolpyruvate: step 7/7. Its function is as follows. Catalyzes the anti-1,4-elimination of the C-3 phosphate and the C-6 proR hydrogen from 5-enolpyruvylshikimate-3-phosphate (EPSP) to yield chorismate, which is the branch point compound that serves as the starting substrate for the three terminal pathways of aromatic amino acid biosynthesis. This reaction introduces a second double bond into the aromatic ring system. The polypeptide is Chorismate synthase (Saccharophagus degradans (strain 2-40 / ATCC 43961 / DSM 17024)).